Reading from the N-terminus, the 212-residue chain is RNA chaperone ProQ (212 aa).

The segment at 107–153 (QDKAKAKRVAQAKSANPAAKTAKKPVKKPVAKRPKPAQSSKPAKEPV) is disordered. Over residues 117-126 (QAKSANPAAK) the composition is skewed to low complexity. Over residues 127–141 (TAKKPVKKPVAKRPK) the composition is skewed to basic residues.

Belongs to the ProQ family.

It localises to the cytoplasm. Functionally, RNA chaperone with significant RNA binding, RNA strand exchange and RNA duplexing activities. The sequence is that of RNA chaperone ProQ from Shewanella pealeana (strain ATCC 700345 / ANG-SQ1).